The following is a 399-amino-acid chain: Serine palmitoyltransferase (399 aa).

Pyridoxal 5'-phosphate is bound by residues 113–114 (GF), His-213, Thr-241, and Ser-243. At Lys-244 the chain carries N6-(pyridoxal phosphate)lysine.

This sequence belongs to the class-II pyridoxal-phosphate-dependent aminotransferase family. As to quaternary structure, homodimer. Pyridoxal 5'-phosphate serves as cofactor.

The protein resides in the cytoplasm. The protein localises to the cell inner membrane. The catalysed reaction is L-serine + hexadecanoyl-CoA + H(+) = 3-oxosphinganine + CO2 + CoA. The protein operates within lipid metabolism; sphingolipid metabolism. Catalyzes the condensation of L-serine with palmitoyl-CoA (hexadecanoyl-CoA) to produce 3-oxosphinganine. Exhibits a broad substrate specificity concerning the chain length and the degree of unsaturation of acyl-CoA. The chain is Serine palmitoyltransferase from Sphingobacterium multivorum.